Reading from the N-terminus, the 440-residue chain is Protein disulfide-isomerase 5-2 (440 aa).

The first 23 residues, Met1–Ser23, serve as a signal peptide directing secretion. A Thioredoxin domain is found at Ser24–Ala139. Residues Cys61 and Cys64 each act as nucleophile in the active site. A disulfide bridge links Cys61 with Cys64. Thr160 carries the post-translational modification Phosphothreonine. Asn171 is a glycosylation site (N-linked (GlcNAc...) asparagine). The chain crosses the membrane as a helical span at residues Ser376–Leu396. The tract at residues Thr406–Asp440 is disordered. Residues Ser430–Asp440 show a composition bias toward basic and acidic residues.

Belongs to the protein disulfide isomerase family. Widely expressed.

The protein resides in the membrane. Acts as a protein-folding catalyst that interacts with nascent polypeptides to catalyze the formation, isomerization, and reduction or oxidation of disulfide bonds. The protein is Protein disulfide-isomerase 5-2 (PDIL5-2) of Arabidopsis thaliana (Mouse-ear cress).